The primary structure comprises 284 residues: L-ribulose-5-phosphate 3-epimerase UlaE (284 aa).

The protein belongs to the L-ribulose-5-phosphate 3-epimerase family.

It catalyses the reaction L-ribulose 5-phosphate = L-xylulose 5-phosphate. Its pathway is cofactor degradation; L-ascorbate degradation; D-xylulose 5-phosphate from L-ascorbate: step 3/4. Functionally, catalyzes the isomerization of L-xylulose-5-phosphate to L-ribulose-5-phosphate. Is involved in the anaerobic L-ascorbate utilization. The polypeptide is L-ribulose-5-phosphate 3-epimerase UlaE (Escherichia coli (strain ATCC 8739 / DSM 1576 / NBRC 3972 / NCIMB 8545 / WDCM 00012 / Crooks)).